Consider the following 392-residue polypeptide: NADH-quinone oxidoreductase subunit D 1 (392 aa).

The protein belongs to the complex I 49 kDa subunit family. NDH-1 is composed of 14 different subunits. Subunits NuoB, C, D, E, F, and G constitute the peripheral sector of the complex.

The protein resides in the cell inner membrane. The catalysed reaction is a quinone + NADH + 5 H(+)(in) = a quinol + NAD(+) + 4 H(+)(out). Its function is as follows. NDH-1 shuttles electrons from NADH, via FMN and iron-sulfur (Fe-S) centers, to quinones in the respiratory chain. The immediate electron acceptor for the enzyme in this species is believed to be a menaquinone. Couples the redox reaction to proton translocation (for every two electrons transferred, four hydrogen ions are translocated across the cytoplasmic membrane), and thus conserves the redox energy in a proton gradient. The polypeptide is NADH-quinone oxidoreductase subunit D 1 (Cytophaga hutchinsonii (strain ATCC 33406 / DSM 1761 / CIP 103989 / NBRC 15051 / NCIMB 9469 / D465)).